The sequence spans 338 residues: MIGQAPAFWSRRNSLMGWVLSPIGALVGALTLKRMAGPSTGVPVPVICIGNPTVGGSGKTPTALMVLARLQEQGARPFALLRGHGGRLAGPVLVDPQTHTAADVGDEALLLAQATPTVVSRDRPAGAAHAVALGASHVVMDDGFQNPSLAKDVSLLVIDGEAGVGNGRVLPAGPLRAPLAPQLDRADALLVAGGGRCADALGRLAHSHGKVVLRGQVRPDPSVIATLEAGTVLAFAGIGRPQKLADTLAAAGVRIGRLQPFPDHHPYQPSDIAPLIAEAARERWQLVTTTKDHVRLADRRFADMAGAITALPVTMQLDAPEALDDILRLAEARAAARS.

53 to 60 (TVGGSGKT) lines the ATP pocket.

It belongs to the LpxK family.

It catalyses the reaction a lipid A disaccharide + ATP = a lipid IVA + ADP + H(+). It participates in glycolipid biosynthesis; lipid IV(A) biosynthesis; lipid IV(A) from (3R)-3-hydroxytetradecanoyl-[acyl-carrier-protein] and UDP-N-acetyl-alpha-D-glucosamine: step 6/6. Its function is as follows. Transfers the gamma-phosphate of ATP to the 4'-position of a tetraacyldisaccharide 1-phosphate intermediate (termed DS-1-P) to form tetraacyldisaccharide 1,4'-bis-phosphate (lipid IVA). The chain is Tetraacyldisaccharide 4'-kinase from Azorhizobium caulinodans (strain ATCC 43989 / DSM 5975 / JCM 20966 / LMG 6465 / NBRC 14845 / NCIMB 13405 / ORS 571).